We begin with the raw amino-acid sequence, 348 residues long: Protein RecA (348 aa).

64–71 (GPESSGKT) provides a ligand contact to ATP. Residues 326 to 335 (EIDGTNKEPL) show a composition bias toward basic and acidic residues. Positions 326 to 348 (EIDGTNKEPLDENEETLSLLDDE) are disordered. Residues 336–348 (DENEETLSLLDDE) show a composition bias toward acidic residues.

It belongs to the RecA family.

Its subcellular location is the cytoplasm. Its function is as follows. Can catalyze the hydrolysis of ATP in the presence of single-stranded DNA, the ATP-dependent uptake of single-stranded DNA by duplex DNA, and the ATP-dependent hybridization of homologous single-stranded DNAs. It interacts with LexA causing its activation and leading to its autocatalytic cleavage. This chain is Protein RecA, found in Listeria innocua serovar 6a (strain ATCC BAA-680 / CLIP 11262).